The primary structure comprises 887 residues: Amyloid-beta-like protein (887 aa).

An N-terminal signal peptide occupies residues methionine 1–alanine 27. The Extracellular segment spans residues alanine 28–tyrosine 813. Positions proline 30 to glutamine 133 are GFLD subdomain. Positions proline 30–lysine 199 constitute an E1 domain. 6 disulfides stabilise this stretch: cysteine 40–cysteine 70, cysteine 81–cysteine 128, cysteine 106–cysteine 116, cysteine 143–cysteine 197, cysteine 154–cysteine 184, and cysteine 168–cysteine 196. The cuBD subdomain stretch occupies residues glutamate 141–lysine 199. N-linked (GlcNAc...) asparagine glycans are attached at residues asparagine 150 and asparagine 161. Disordered regions lie at residues asparagine 225–glutamine 365 and asparagine 377–serine 396. N-linked (GlcNAc...) asparagine glycosylation is found at asparagine 237 and asparagine 240. Residues asparagine 246–alanine 267 are compositionally biased toward acidic residues. Low complexity predominate over residues aspartate 268 to aspartate 292. Over residues isoleucine 293–alanine 321 the composition is skewed to acidic residues. Over residues alanine 329–lysine 352 the composition is skewed to low complexity. One can recognise an E2 domain in the interval threonine 395–tyrosine 597. The N-linked (GlcNAc...) asparagine glycan is linked to asparagine 574. The disordered stretch occupies residues lysine 675–serine 743. Positions glutamine 681–glutamine 699 are enriched in low complexity. A helical transmembrane segment spans residues phenylalanine 814–alanine 834. Residues lysine 835–glutamate 887 lie on the Cytoplasmic side of the membrane. The YENPXY motif signature appears at tyrosine 875 to tyrosine 880.

It belongs to the APP family. As to quaternary structure, interacts (via the intracellular domain, ICD) with APP-BP1. As to expression, expressed in postmitotic neurons in the central and peripheral nervous systems. Within the nervous system, transcripts are not observed in neuroblasts, newly generated neurons and at least one class of presumed glial cells.

The protein resides in the membrane. In terms of biological role, during development, plays a role in the regulation of the neddylation pathway. Appl and APP-BP1 interact antagonistically during development. The sequence is that of Amyloid-beta-like protein (Appl) from Drosophila melanogaster (Fruit fly).